A 178-amino-acid polypeptide reads, in one-letter code: Cytidylate kinase (178 aa).

7-15 (GLPGTGTTT) lines the ATP pocket.

Belongs to the cytidylate kinase family. Type 2 subfamily.

The protein localises to the cytoplasm. The catalysed reaction is CMP + ATP = CDP + ADP. The enzyme catalyses dCMP + ATP = dCDP + ADP. This Methanocaldococcus jannaschii (strain ATCC 43067 / DSM 2661 / JAL-1 / JCM 10045 / NBRC 100440) (Methanococcus jannaschii) protein is Cytidylate kinase (cmk).